The sequence spans 296 residues: uncharacterized protein (296 aa).

Positions 129-170 (VKELKDLIRTVADEHMKMKREHEAAMKELTLLINNQKQQQQQ) form a coiled coil. Residues 165-187 (KQQQQQPVPMPRNSTATRPKNLA) form a disordered region.

This is an uncharacterized protein from Ostreid herpesvirus 1 (isolate France) (OsHV-1).